The sequence spans 348 residues: Flavonol synthase/flavanone 3-hydroxylase (348 aa).

A Fe2OG dioxygenase domain is found at 209-309; that stretch reads EIVYLLKINY…RMSWPVFLEP (101 aa). Fe cation-binding residues include histidine 234, aspartate 236, and histidine 290.

This sequence belongs to the iron/ascorbate-dependent oxidoreductase family. It depends on L-ascorbate as a cofactor. The cofactor is Fe cation.

Its subcellular location is the cytoplasm. The catalysed reaction is a (2R,3R)-dihydroflavonol + 2-oxoglutarate + O2 = a flavonol + succinate + CO2 + H2O. It carries out the reaction a (2S)-flavan-4-one + 2-oxoglutarate + O2 = a (2R,3R)-dihydroflavonol + succinate + CO2. The protein operates within secondary metabolite biosynthesis; flavonoid biosynthesis. Its function is as follows. Catalyzes the formation of flavonols from dihydroflavonols. It can act on dihydrokaempferol to produce kaempferol, on dihydroquercetin to produce quercitin and on dihydromyricetin to produce myricetin. The protein is Flavonol synthase/flavanone 3-hydroxylase (FL) of Petunia hybrida (Petunia).